A 78-amino-acid polypeptide reads, in one-letter code: Alpha-neurotoxin homolog 7 (78 aa).

The first 21 residues, 1–21 (MKTLLLTLVVVTIVCLDFGYT), serve as a signal peptide directing secretion. Disulfide bonds link Cys-24–Cys-42, Cys-37–Cys-57, Cys-59–Cys-70, and Cys-71–Cys-76.

The protein belongs to the three-finger toxin family. Short-chain subfamily. Orphan group XII sub-subfamily. As to expression, expressed by the venom gland.

The protein resides in the secreted. The polypeptide is Alpha-neurotoxin homolog 7 (Micrurus corallinus (Brazilian coral snake)).